The following is a 150-amino-acid chain: Large ribosomal subunit protein bL9 (150 aa).

It belongs to the bacterial ribosomal protein bL9 family.

Functionally, binds to the 23S rRNA. The sequence is that of Large ribosomal subunit protein bL9 from Pectobacterium carotovorum subsp. carotovorum (strain PC1).